Consider the following 701-residue polypeptide: Protein mono-ADP-ribosyltransferase PARP12 (701 aa).

3 consecutive C3H1-type zinc fingers follow at residues 94–119 (LCRF…HSLT), 150–179 (WLLP…IKLH), and 180–202 (ICQY…HDFS). The disordered stretch occupies residues 234–268 (KNKSSAPSRVPPLFVPQGTSERKDSSGSVSPNTLS). Ser-258 bears the Phosphoserine mark. Polar residues predominate over residues 259-268 (SGSVSPNTLS). 2 consecutive C3H1-type zinc fingers follow at residues 270–297 (EEGD…HFHL) and 271–296 (EGDQ…VHFH). WWE domains lie at 298–361 (PYRW…RLST) and 364–458 (SVTK…KVCR). Position 474 is an ADP-ribosylcysteine (Cys-474). A PARP catalytic domain is found at 484 to 698 (IPDYWDSSAL…ILLALGSLFS (215 aa)). ADP-ribosyl aspartic acid is present on residues Asp-600 and Asp-611.

The protein belongs to the ARTD/PARP family. Interacts with PARP11; this interaction plays a key role in zika virus suppression. Interacts with ISG15. Auto-mono-ADP-ribosylated. In terms of processing, phosphorylated by PRKD1.

It localises to the nucleus. The protein localises to the golgi apparatus. It is found in the trans-Golgi network. The protein resides in the cytoplasm. Its subcellular location is the stress granule. It carries out the reaction L-aspartyl-[protein] + NAD(+) = 4-O-(ADP-D-ribosyl)-L-aspartyl-[protein] + nicotinamide. The catalysed reaction is L-cysteinyl-[protein] + NAD(+) = S-(ADP-D-ribosyl)-L-cysteinyl-[protein] + nicotinamide + H(+). Its function is as follows. Mono-ADP-ribosyltransferase that mediates mono-ADP-ribosylation of target proteins. Acts as an antiviral factor by cooperating with PARP11 to suppress Zika virus replication. Displays anti-alphavirus activity during IFN-gamma immune activation by directly ADP-ribosylating the alphaviral non-structural proteins nsP3 and nsP4. Acts as a component of the PRKD1-driven regulatory cascade that selectively controls a major branch of the basolateral transport pathway by catalyzing the MARylation of GOLGA1. Acts also as a key regulator of mitochondrial function, protein translation, and inflammation. Inhibits PINK1/Parkin-dependent mitophagy and promotes cartilage degeneration by inhibiting the ubiquitination and SUMOylation of MFN1/2 by upregulating ISG15 and ISGylation. This chain is Protein mono-ADP-ribosyltransferase PARP12, found in Homo sapiens (Human).